The chain runs to 172 residues: Urease accessory protein UreE (172 aa).

The protein belongs to the UreE family.

Its subcellular location is the cytoplasm. Functionally, involved in urease metallocenter assembly. Binds nickel. Probably functions as a nickel donor during metallocenter assembly. This Shewanella halifaxensis (strain HAW-EB4) protein is Urease accessory protein UreE.